A 100-amino-acid polypeptide reads, in one-letter code: Small ribosomal subunit protein uS14c (100 aa).

The protein belongs to the universal ribosomal protein uS14 family. In terms of assembly, part of the 30S ribosomal subunit.

It localises to the plastid. It is found in the chloroplast. Binds 16S rRNA, required for the assembly of 30S particles. This is Small ribosomal subunit protein uS14c from Gossypium barbadense (Sea Island cotton).